A 568-amino-acid polypeptide reads, in one-letter code: Clathrin coat assembly protein AP180B (568 aa).

One can recognise an ENTH domain in the interval 1–127 (MSSLYTKLVK…EEYGRLGMDH (127 aa)). Residues 262-283 (HLREETKRQRGEPSEPQQDRKP) are compositionally biased toward basic and acidic residues. Residues 262–302 (HLREETKRQRGEPSEPQQDRKPSTAISSTSSHNNNSNDKNK) are disordered. Residue Lys-282 forms a Glycyl lysine isopeptide (Lys-Gly) (interchain with G-Cter in ubiquitin) linkage. Residues 284-298 (STAISSTSSHNNNSN) show a composition bias toward low complexity. Phosphothreonine is present on Thr-449.

It belongs to the AP180 family. In terms of assembly, interacts with PAN1 and the clathrin heavy and light chains CHC1 and CLC1.

Its subcellular location is the bud. It is found in the bud neck. It localises to the cell membrane. The protein localises to the cytoplasm. In terms of biological role, involved in endocytosis and clathrin cage assembly. The sequence is that of Clathrin coat assembly protein AP180B (YAP1802) from Saccharomyces cerevisiae (strain ATCC 204508 / S288c) (Baker's yeast).